A 421-amino-acid chain; its full sequence is MAEQLALVIGGTIGGLLLLLLIGASCCLWRRFCATLTYEELPGTPAMATTAASSGQRDRPCQPHARTQLSRPPAVPFVVPPTLQGRDWVPLHSGEWADAPWDPCPASELLPHTSSGGLGDACMVGAINPELYKFPEDKSETDFPDGCLGRLWFSVEYEQEAERLLVGLIKAQHLQAPSETCSPLVKLYLLPDERRFLQSKTKRKTSNPQFDEHFIFQVSSKTITQRVLKFSVYHVDRQRKHQLLGQVLFPLKNETLVGDCRRVIWRDLEAESLEPPSEFGDLQFCLSYNDYLSRLTVVVLRAKGLRLQEDRGIVSVFVKVSLMNHNKFVKCKKTSAVLGSINPVYNETFSFKADATELDTASLSLTVVQNMEGDKSQQLGRVVVGPYMYTRGRELEHWDEMLSKPKELVKRWHALCRTTEP.

The Extracellular portion of the chain corresponds to 1 to 4 (MAEQ). A helical; Signal-anchor for type III membrane protein transmembrane segment spans residues 5–29 (LALVIGGTIGGLLLLLLIGASCCLW). Topologically, residues 30-421 (RRFCATLTYE…WHALCRTTEP (392 aa)) are cytoplasmic. The segment at 47 to 68 (MATTAASSGQRDRPCQPHARTQ) is disordered. 2 C2 domains span residues 147–264 (CLGR…RRVI) and 278–399 (EFGD…EHWD).

It belongs to the synaptotagmin family. Homodimer.

The protein localises to the cell membrane. Functionally, may be involved in the trafficking and exocytosis of secretory vesicles in non-neuronal tissues. The polypeptide is Synaptotagmin-15 (SYT15) (Homo sapiens (Human)).